Reading from the N-terminus, the 227-residue chain is MDIERINDHTMKFFITYIDIEDRGFNREEIWYDRERSEELFWEMMDEARDHDDFFIDGPLWIQVQAVDKGIEVLVTKAELSKDGQKLELPIGVDKIIDIPLDEGIESLFQQELVEEVEEQTGTNFNEDGTFGFLIKFNDFEDVISLSHRLIFEDIKDELYSFEDRYYVYVEFDEVLHDEEEIDRILSIILEYGEESTLTIHRVSEYGKQIVKEHALETIRNNFPAKT.

This sequence belongs to the MecA family. As to quaternary structure, homodimer.

In terms of biological role, enables the recognition and targeting of unfolded and aggregated proteins to the ClpC protease or to other proteins involved in proteolysis. Acts negatively in the development of competence by binding ComK and recruiting it to the ClpCP protease. When overexpressed, inhibits sporulation. Also involved in Spx degradation by ClpC. The sequence is that of Adapter protein MecA 1 (mecA1) from Bacillus cereus (strain ATCC 14579 / DSM 31 / CCUG 7414 / JCM 2152 / NBRC 15305 / NCIMB 9373 / NCTC 2599 / NRRL B-3711).